The sequence spans 421 residues: Alpha-1-antitrypsin-related protein (421 aa).

The signal sequence occupies residues 1 to 21; it reads MPFSVSWGILLLAGLCCLVPS. N-linked (GlcNAc...) asparagine glycans are attached at residues Asn-56, Asn-110, Asn-148, and Asn-274.

It belongs to the serpin family. As to quaternary structure, interacts with CANX and PDIA3. Glycosylated. In terms of tissue distribution, expressed in the liver, leukocytes and testis. Also detected in brain, colon, uterus, esophagus, spleen, trachea, kidney and lung.

Its subcellular location is the endoplasmic reticulum. Putative serine protease inhibitor. The sequence is that of Alpha-1-antitrypsin-related protein (SERPINA2) from Homo sapiens (Human).